We begin with the raw amino-acid sequence, 227 residues long: A-type potassium channel modulatory protein KCNIP1 (227 aa).

Positions 38-94 constitute an EF-hand 1; degenerate domain; sequence LEMTMVCHRPEGLEQLEAQTNFTKRELQVLYRGFKNECPSGVVNEETFKQIYAQFFP. EF-hand domains are found at residues 97–132, 133–168, and 181–216; these read DAST…LLRG, TVHE…IYDM, and TPRQ…DDNI. Residues D146, N148, D150, Y152, E157, D194, N196, D198, and E205 each coordinate Ca(2+). The tract at residues 214–227 is interaction with KCND2; sequence DNIMRSLQLFQNVM.

Belongs to the recoverin family. As to quaternary structure, component of heteromultimeric potassium channels. Identified in potassium channel complexes containing KCND1, KCND2, KCND3, KCNIP1, KCNIP2, KCNIP3, KCNIP4, DPP6 and DPP10. Part of a heterooctamer composed of the tetrameric channel and four KCNIP1 chains. Probably part of a complex consisting of KCNIP1, KCNIP2 isoform 3 and KCND2. Self-associates to form homodimers and homotetramers. Interacts with KCNIP2 isoform 3 in a calcium-dependent manner. Interacts with KCND2; this interaction mediates the capture of both the N- and C-terminus of KCND2, thus preventing KCND2 N-type inactivation and modulates the channel gating kinetics. Interacts with KCND3; each KCNIP1 monomer interacts with two adjacent KCND3 subunits, through both the N-terminal inactivation ball of a KCND3 subunit and a C-terminal helix from the adjacent KCND3 subunit, clamping them together; this interaction stabilizes the tetrameric form and modulates the channel gating kinetics namely channel activation and inactivation kinetics and rate of recovery from inactivation. Detected in hippocampus and in the molecular layer of the dentate gyrus (at protein level). Isoform 1 and isoform 2 are predominantly expressed at equal levels in brain. Colocalizes with KCND3 in inhibitory interneurons in cortex and hippocampus and in striatal interneurons.

It localises to the cell membrane. Its subcellular location is the cytoplasm. The protein resides in the cell projection. It is found in the dendrite. Functionally, regulatory subunit of Kv4/D (Shal)-type voltage-gated rapidly inactivating A-type potassium channels. Regulates channel density, inactivation kinetics and rate of recovery from inactivation in a calcium-dependent and isoform-specific manner. Modulates KCND2/Kv4.2 currents. In vitro, modulates KCND1/Kv4.1 currents. Increases the presence of KCND2 at the cell surface. The polypeptide is A-type potassium channel modulatory protein KCNIP1 (Rattus norvegicus (Rat)).